Here is a 94-residue protein sequence, read N- to C-terminus: uncharacterized protein (94 aa).

This is an uncharacterized protein from Schizosaccharomyces pombe (strain 972 / ATCC 24843) (Fission yeast).